Consider the following 507-residue polypeptide: Glutamyl-tRNA(Gln) amidotransferase subunit A, mitochondrial (507 aa).

Catalysis depends on charge relay system residues Lys-79 and Ser-160. Ser-184 (acyl-ester intermediate) is an active-site residue.

Belongs to the amidase family. GatA subfamily. As to quaternary structure, subunit of the heterotrimeric GatCAB amidotransferase (AdT) complex, composed of A, B and C subunits.

Its subcellular location is the mitochondrion. It catalyses the reaction L-glutamyl-tRNA(Gln) + L-glutamine + ATP + H2O = L-glutaminyl-tRNA(Gln) + L-glutamate + ADP + phosphate + H(+). Functionally, allows the formation of correctly charged Gln-tRNA(Gln) through the transamidation of misacylated Glu-tRNA(Gln) in the mitochondria. The reaction takes place in the presence of glutamine and ATP through an activated gamma-phospho-Glu-tRNA(Gln). The sequence is that of Glutamyl-tRNA(Gln) amidotransferase subunit A, mitochondrial from Drosophila pseudoobscura pseudoobscura (Fruit fly).